Here is a 311-residue protein sequence, read N- to C-terminus: MKVAVLGAAGGIGQALALLLKTQLPAGSKLSLYDIAPVTPGVAVDLSHIPTDVEVKGFAGQDPTDALVGADVVLMSAGVARKPGMDRSDLFNINAGIVRNLMEKVAVTCPKALVGIITNPVNTTVAIAAEVLKNAGVYDKNRLFGITTLDVIRSETFIAELKGLNVADVKVNVIGGHSGVTILPLLSQVEGVTFTDEEVAAMTTRIQNAGTEVVEAKAGGGSATLSMGQAACRFGLSLVRGLQGEANVVECAYVDGGSEHATFFAQPILLGKNGVEKVLPYGEISAFEANARDAMLDTLKGDIKLGVEFVK.

NAD(+)-binding positions include 7-13 (GAAGGIG) and Asp34. Substrate-binding residues include Arg81 and Arg87. NAD(+) contacts are provided by residues Asn94 and 117–119 (ITN). Positions 119 and 153 each coordinate substrate. His177 (proton acceptor) is an active-site residue. Met227 contacts NAD(+).

The protein belongs to the LDH/MDH superfamily. MDH type 1 family. Homodimer.

It catalyses the reaction (S)-malate + NAD(+) = oxaloacetate + NADH + H(+). Its function is as follows. Catalyzes the reversible oxidation of malate to oxaloacetate. In Shewanella frigidimarina (strain NCIMB 400), this protein is Malate dehydrogenase.